The primary structure comprises 344 residues: Holliday junction branch migration complex subunit RuvB (344 aa).

The segment at 4-194 is large ATPase domain (RuvB-L); the sequence is CLLRFCYNSL…FGITGHMEYY (191 aa). Residues L33, R34, G75, K78, T79, T80, 141 to 143, R184, Y194, and R231 each bind ATP; that span reads EDF. T79 contributes to the Mg(2+) binding site. Residues 195 to 265 are small ATPAse domain (RuvB-S); sequence TDIDLTEIVE…ITDKALTMLD (71 aa). The segment at 268 to 344 is head domain (RuvB-H); sequence HEGLDYVDQK…YEHLGYRYTE (77 aa). The DNA site is built by R304, R323, R325, and R328.

It belongs to the RuvB family. In terms of assembly, homohexamer. Forms an RuvA(8)-RuvB(12)-Holliday junction (HJ) complex. HJ DNA is sandwiched between 2 RuvA tetramers; dsDNA enters through RuvA and exits via RuvB. An RuvB hexamer assembles on each DNA strand where it exits the tetramer. Each RuvB hexamer is contacted by two RuvA subunits (via domain III) on 2 adjacent RuvB subunits; this complex drives branch migration. In the full resolvosome a probable DNA-RuvA(4)-RuvB(12)-RuvC(2) complex forms which resolves the HJ.

It is found in the cytoplasm. It carries out the reaction ATP + H2O = ADP + phosphate + H(+). Functionally, the RuvA-RuvB-RuvC complex processes Holliday junction (HJ) DNA during genetic recombination and DNA repair, while the RuvA-RuvB complex plays an important role in the rescue of blocked DNA replication forks via replication fork reversal (RFR). RuvA specifically binds to HJ cruciform DNA, conferring on it an open structure. The RuvB hexamer acts as an ATP-dependent pump, pulling dsDNA into and through the RuvAB complex. RuvB forms 2 homohexamers on either side of HJ DNA bound by 1 or 2 RuvA tetramers; 4 subunits per hexamer contact DNA at a time. Coordinated motions by a converter formed by DNA-disengaged RuvB subunits stimulates ATP hydrolysis and nucleotide exchange. Immobilization of the converter enables RuvB to convert the ATP-contained energy into a lever motion, pulling 2 nucleotides of DNA out of the RuvA tetramer per ATP hydrolyzed, thus driving DNA branch migration. The RuvB motors rotate together with the DNA substrate, which together with the progressing nucleotide cycle form the mechanistic basis for DNA recombination by continuous HJ branch migration. Branch migration allows RuvC to scan DNA until it finds its consensus sequence, where it cleaves and resolves cruciform DNA. This Streptococcus mutans serotype c (strain ATCC 700610 / UA159) protein is Holliday junction branch migration complex subunit RuvB.